Reading from the N-terminus, the 224-residue chain is LexA repressor (224 aa).

Positions 31-51 (RAEIAAELGFKSANAAEEHLQ) form a DNA-binding region, H-T-H motif. Active-site for autocatalytic cleavage activity residues include serine 142 and lysine 179.

This sequence belongs to the peptidase S24 family. In terms of assembly, homodimer.

The catalysed reaction is Hydrolysis of Ala-|-Gly bond in repressor LexA.. Its function is as follows. Represses a number of genes involved in the response to DNA damage (SOS response), including recA and lexA. In the presence of single-stranded DNA, RecA interacts with LexA causing an autocatalytic cleavage which disrupts the DNA-binding part of LexA, leading to derepression of the SOS regulon and eventually DNA repair. This Verminephrobacter eiseniae (strain EF01-2) protein is LexA repressor.